We begin with the raw amino-acid sequence, 1013 residues long: Ephrin type-B receptor 6 (1013 aa).

The first 31 residues, 1–31, serve as a signal peptide directing secretion; it reads MASENTAGSGSRVAGMVYSLWLLVLGPSVLA. Residues 32-590 are Extracellular-facing; it reads LEEVLLDTTG…LPEKLSLVIG (559 aa). The Eph LBD domain maps to 33–231; the sequence is EEVLLDTTGE…FSYTCPSVLR (199 aa). 2 consecutive Fibronectin type-III domains span residues 363-478 and 479-574; these read PPSA…TSHE and VPSA…TLPQ. Asn472 is a glycosylation site (N-linked (GlcNAc...) asparagine). The chain crosses the membrane as a helical span at residues 591–611; it reads SILGALAFLLLAAITVLAVIF. The Cytoplasmic portion of the chain corresponds to 612–1013; sequence QRKRRGTGYT…HLRQPGSVEV (402 aa). The Protein kinase domain occupies 662-911; that stretch reads IKIEEVIGAG…QLVAAFDKMI (250 aa). Position 668 to 676 (668 to 676) interacts with ATP; sequence IGAGSFGEV. The SAM domain maps to 940-1004; that stretch reads PCLDSPQAWL…LHNIQLLQQH (65 aa). The short motif at 1011 to 1013 is the PDZ-binding element; it reads VEV.

Belongs to the protein kinase superfamily. Tyr protein kinase family. Ephrin receptor subfamily. In terms of assembly, interacts with CBL and EPHB1. Interacts with FYN; this interaction takes place in a ligand-independent manner. In terms of processing, ligand-binding increases phosphorylation on tyrosine residues. Phosphorylation on tyrosine residues is mediated by transphosphorylation by the catalytically active EPHB1 in a ligand-independent manner. Tyrosine phosphorylation of the receptor may act as a switch on the functional transition from cell adhesion/attraction to de-adhesion/repulsion.

The protein localises to the membrane. Its function is as follows. Kinase-defective receptor for members of the ephrin-B family. Binds to ephrin-B1 and ephrin-B2. Modulates cell adhesion and migration by exerting both positive and negative effects upon stimulation with ephrin-B2. Inhibits JNK activation, T-cell receptor-induced IL-2 secretion and CD25 expression upon stimulation with ephrin-B2. The chain is Ephrin type-B receptor 6 (Ephb6) from Rattus norvegicus (Rat).